The chain runs to 387 residues: Phosphoglycerate kinase (387 aa).

Substrate contacts are provided by residues 21-23 (DLN), arginine 36, 59-62 (HLGR), arginine 113, and arginine 146. Residues lysine 197, glutamate 314, and 340-343 (GGDT) contribute to the ATP site.

This sequence belongs to the phosphoglycerate kinase family. As to quaternary structure, monomer.

Its subcellular location is the cytoplasm. It catalyses the reaction (2R)-3-phosphoglycerate + ATP = (2R)-3-phospho-glyceroyl phosphate + ADP. The protein operates within carbohydrate degradation; glycolysis; pyruvate from D-glyceraldehyde 3-phosphate: step 2/5. This Yersinia enterocolitica serotype O:8 / biotype 1B (strain NCTC 13174 / 8081) protein is Phosphoglycerate kinase.